The chain runs to 515 residues: Protein DETOXIFICATION 32 (515 aa).

Basic and acidic residues predominate over residues 1 to 26 (METLNVDHEDTISSEQEHRAHTKSDT). Residues 1-30 (METLNVDHEDTISSEQEHRAHTKSDTDMPP) form a disordered region. 12 helical membrane-spanning segments follow: residues 48-68 (LWWL…LGAV), 90-110 (VISG…ATLC), 131-151 (IILN…TPLL), 167-187 (FSLW…TAKF), 194-214 (VIAM…LSWL), 225-245 (GGAV…IVYI), 276-296 (AVMV…AGYL), 303-323 (VAAL…AFGF), 347-367 (LIVA…TLIV), 392-412 (LLAL…VAVG), 418-438 (IVAY…GLVL), and 448-468 (GIWT…LFII). A compositionally biased stretch (basic and acidic residues) spans 488 to 497 (GDQSNKREEI). Residues 488–515 (GDQSNKREEIDLCEEDENNSNGENNHRK) are disordered. Residues 506–515 (NSNGENNHRK) show a composition bias toward low complexity.

Belongs to the multi antimicrobial extrusion (MATE) (TC 2.A.66.1) family.

The protein resides in the membrane. The sequence is that of Protein DETOXIFICATION 32 from Arabidopsis thaliana (Mouse-ear cress).